The chain runs to 254 residues: Hydroxyacylglutathione hydrolase (254 aa).

Zn(2+) is bound by residues His54, His56, Asp58, His59, His111, Asp130, and His168.

The protein belongs to the metallo-beta-lactamase superfamily. Glyoxalase II family. Monomer. Zn(2+) is required as a cofactor.

It carries out the reaction an S-(2-hydroxyacyl)glutathione + H2O = a 2-hydroxy carboxylate + glutathione + H(+). It functions in the pathway secondary metabolite metabolism; methylglyoxal degradation; (R)-lactate from methylglyoxal: step 2/2. Thiolesterase that catalyzes the hydrolysis of S-D-lactoyl-glutathione to form glutathione and D-lactic acid. The protein is Hydroxyacylglutathione hydrolase of Legionella pneumophila (strain Paris).